The chain runs to 345 residues: Protein GAMETE CELL DEFECTIVE 1, mitochondrial (345 aa).

Residues 1-43 (MLALRKTLLHGRLPAAPPAAAAAAIASRIPALLRRLSSSPGDG) constitute a mitochondrion transit peptide. The interval 36 to 82 (LSSSPGDGQGGDEWGSSWSTGITKEHFDGSDAAVGRPVTSPSKPVSP) is disordered.

Its subcellular location is the mitochondrion. Its function is as follows. Essential for fertility (male and female gametophyte functions and development). Required for the integrity of female gametic mitochondria. Involved in embryo apical-basal patterning, and particularly dorsal-ventral patterning, during early embryogenesis, and endosperm free nucleus positioning and development as well as early endosperm development, probably by modulating the expression pattern of related genes (e.g. AL1, MYB3/AL2, CYP78A13/GE, PNH1, HAZ1, MPK6 and OSH1). Has function in triggering of endosperm programmed cell death (PCD) leading to syncytial endosperm cellularization and starchy endosperm cell maturation. Implicated in central vacuole dynamics necessary for microspore development leading to pollen production, and for pollen development and germination. The polypeptide is Protein GAMETE CELL DEFECTIVE 1, mitochondrial (Oryza sativa subsp. indica (Rice)).